Reading from the N-terminus, the 564-residue chain is Arginine--tRNA ligase (564 aa).

The 'HIGH' region motif lies at 136–146; sequence ANPTGPLHMGN.

This sequence belongs to the class-I aminoacyl-tRNA synthetase family. Monomer.

It localises to the cytoplasm. The enzyme catalyses tRNA(Arg) + L-arginine + ATP = L-arginyl-tRNA(Arg) + AMP + diphosphate. The chain is Arginine--tRNA ligase from Acetivibrio thermocellus (strain ATCC 27405 / DSM 1237 / JCM 9322 / NBRC 103400 / NCIMB 10682 / NRRL B-4536 / VPI 7372) (Clostridium thermocellum).